The following is a 279-amino-acid chain: Elongation factor Ts (279 aa).

Positions Thr80–Val83 are involved in Mg(2+) ion dislocation from EF-Tu.

The protein belongs to the EF-Ts family.

Its subcellular location is the cytoplasm. In terms of biological role, associates with the EF-Tu.GDP complex and induces the exchange of GDP to GTP. It remains bound to the aminoacyl-tRNA.EF-Tu.GTP complex up to the GTP hydrolysis stage on the ribosome. The sequence is that of Elongation factor Ts from Borreliella afzelii (strain PKo) (Borrelia afzelii).